A 285-amino-acid polypeptide reads, in one-letter code: Bifunctional protein FolD (285 aa).

Residues 165–167 and Ser190 contribute to the NADP(+) site; that span reads GRS.

The protein belongs to the tetrahydrofolate dehydrogenase/cyclohydrolase family. Homodimer.

It catalyses the reaction (6R)-5,10-methylene-5,6,7,8-tetrahydrofolate + NADP(+) = (6R)-5,10-methenyltetrahydrofolate + NADPH. The catalysed reaction is (6R)-5,10-methenyltetrahydrofolate + H2O = (6R)-10-formyltetrahydrofolate + H(+). The protein operates within one-carbon metabolism; tetrahydrofolate interconversion. Catalyzes the oxidation of 5,10-methylenetetrahydrofolate to 5,10-methenyltetrahydrofolate and then the hydrolysis of 5,10-methenyltetrahydrofolate to 10-formyltetrahydrofolate. The chain is Bifunctional protein FolD from Streptococcus pneumoniae serotype 4 (strain ATCC BAA-334 / TIGR4).